The following is an 844-amino-acid chain: E3 ubiquitin-protein ligase BRE1-like 2 (844 aa).

Coiled coils occupy residues M1–Q38 and E160–T240. The segment at S244–G269 is disordered. Over residues L245–D261 the composition is skewed to polar residues. Coiled coils occupy residues E290–E604 and K640–K670. Residues C792–G831 form an RING-type zinc finger.

This sequence belongs to the BRE1 family.

It localises to the nucleus. The catalysed reaction is S-ubiquitinyl-[E2 ubiquitin-conjugating enzyme]-L-cysteine + [acceptor protein]-L-lysine = [E2 ubiquitin-conjugating enzyme]-L-cysteine + N(6)-ubiquitinyl-[acceptor protein]-L-lysine.. It functions in the pathway protein modification; protein ubiquitination. Functionally, E3 ubiquitin-protein ligase that monoubiquitinates H2B to form H2BK143ub1. H2BK143ub1 gives a specific tag for epigenetic transcriptional activation and is also prerequisite for H3K4me and maybe H3K79me. It thereby plays a central role in histone code and gene regulation. Forms a ubiquitin ligase complex in cooperation with the E2 enzyme UBC2/RAD6. In Oryza sativa subsp. indica (Rice), this protein is E3 ubiquitin-protein ligase BRE1-like 2 (BRE1B).